We begin with the raw amino-acid sequence, 139 residues long: Transmembrane protein 250 (139 aa).

The next 2 helical transmembrane spans lie at 56 to 76 (FLLY…LAAL) and 116 to 136 (VYGI…FMVF).

(Microbial infection) Interacts with herpes simplex virus 1/HHV-1 protein CVC2/UL25.

It is found in the membrane. The protein localises to the nucleus. Its subcellular location is the cytoplasm. May play a role in cell proliferation by promoting progression into S phase. Its function is as follows. (Microbial infection) Promotes human herpes simplex virus 1/HHV-1 proliferation. In Homo sapiens (Human), this protein is Transmembrane protein 250.